The following is a 415-amino-acid chain: Serine hydroxymethyltransferase 1 (415 aa).

Residues leucine 122 and 126 to 128 (GHL) each bind (6S)-5,6,7,8-tetrahydrofolate. Residue lysine 230 is modified to N6-(pyridoxal phosphate)lysine.

Belongs to the SHMT family. Homodimer. Requires pyridoxal 5'-phosphate as cofactor.

The protein resides in the cytoplasm. It carries out the reaction (6R)-5,10-methylene-5,6,7,8-tetrahydrofolate + glycine + H2O = (6S)-5,6,7,8-tetrahydrofolate + L-serine. Its pathway is one-carbon metabolism; tetrahydrofolate interconversion. It functions in the pathway amino-acid biosynthesis; glycine biosynthesis; glycine from L-serine: step 1/1. Functionally, catalyzes the reversible interconversion of serine and glycine with tetrahydrofolate (THF) serving as the one-carbon carrier. This reaction serves as the major source of one-carbon groups required for the biosynthesis of purines, thymidylate, methionine, and other important biomolecules. Also exhibits THF-independent aldolase activity toward beta-hydroxyamino acids, producing glycine and aldehydes, via a retro-aldol mechanism. The sequence is that of Serine hydroxymethyltransferase 1 from Cupriavidus pinatubonensis (strain JMP 134 / LMG 1197) (Cupriavidus necator (strain JMP 134)).